The sequence spans 162 residues: Corticoliberin (162 aa).

The first 24 residues, 1–24 (MKFQLWVSTGILLVSLLPCHECRA), serve as a signal peptide directing secretion. A propeptide spanning residues 25-119 (FIKSPASSPG…QEDPTEKAKR (95 aa)) is cleaved from the precursor. A disordered region spans residues 91–122 (SQPGMRAASLDGADSPYSAQEDPTEKAKRAEE). The segment covering 113–122 (PTEKAKRAEE) has biased composition (basic and acidic residues). I160 bears the Isoleucine amide mark.

The protein belongs to the sauvagine/corticotropin-releasing factor/urotensin I family.

Its subcellular location is the secreted. This hormone from hypothalamus regulates the release of corticotropin from pituitary gland. The chain is Corticoliberin (crh) from Xenopus laevis (African clawed frog).